Reading from the N-terminus, the 179-residue chain is ATP synthase subunit delta (179 aa).

The protein belongs to the ATPase delta chain family. As to quaternary structure, F-type ATPases have 2 components, F(1) - the catalytic core - and F(0) - the membrane proton channel. F(1) has five subunits: alpha(3), beta(3), gamma(1), delta(1), epsilon(1). F(0) has three main subunits: a(1), b(2) and c(10-14). The alpha and beta chains form an alternating ring which encloses part of the gamma chain. F(1) is attached to F(0) by a central stalk formed by the gamma and epsilon chains, while a peripheral stalk is formed by the delta and b chains.

The protein localises to the cell inner membrane. F(1)F(0) ATP synthase produces ATP from ADP in the presence of a proton or sodium gradient. F-type ATPases consist of two structural domains, F(1) containing the extramembraneous catalytic core and F(0) containing the membrane proton channel, linked together by a central stalk and a peripheral stalk. During catalysis, ATP synthesis in the catalytic domain of F(1) is coupled via a rotary mechanism of the central stalk subunits to proton translocation. Its function is as follows. This protein is part of the stalk that links CF(0) to CF(1). It either transmits conformational changes from CF(0) to CF(1) or is implicated in proton conduction. The sequence is that of ATP synthase subunit delta from Acidobacterium capsulatum (strain ATCC 51196 / DSM 11244 / BCRC 80197 / JCM 7670 / NBRC 15755 / NCIMB 13165 / 161).